Consider the following 346-residue polypeptide: Tryptophan--tRNA ligase (346 aa).

Residues 11-13 and 19-20 each bind ATP; these read RPT and GH. The 'HIGH' region motif lies at 12–20; sequence PTGKLHLGH. Position 143 (Asp143) interacts with L-tryptophan. Residues 155 to 157, Leu193, and 201 to 205 contribute to the ATP site; these read GKD and KMSKS. A 'KMSKS' region motif is present at residues 201-205; it reads KMSKS.

This sequence belongs to the class-I aminoacyl-tRNA synthetase family. Homodimer.

The protein resides in the cytoplasm. It catalyses the reaction tRNA(Trp) + L-tryptophan + ATP = L-tryptophyl-tRNA(Trp) + AMP + diphosphate + H(+). Its function is as follows. Catalyzes the attachment of tryptophan to tRNA(Trp). This chain is Tryptophan--tRNA ligase, found in Chlamydia muridarum (strain MoPn / Nigg).